A 183-amino-acid polypeptide reads, in one-letter code: GMP synthase [glutamine-hydrolyzing] subunit A (183 aa).

Residues 3–183 (HILVVDNHGQ…VFENFVAICE (181 aa)) form the Glutamine amidotransferase type-1 domain. Cysteine 74 acts as the Nucleophile in catalysis. Catalysis depends on residues histidine 162 and glutamate 164.

As to quaternary structure, heterodimer composed of a glutamine amidotransferase subunit (A) and a GMP-binding subunit (B).

The catalysed reaction is XMP + L-glutamine + ATP + H2O = GMP + L-glutamate + AMP + diphosphate + 2 H(+). Its pathway is purine metabolism; GMP biosynthesis; GMP from XMP (L-Gln route): step 1/1. In terms of biological role, catalyzes the synthesis of GMP from XMP. The polypeptide is GMP synthase [glutamine-hydrolyzing] subunit A (Halobacterium salinarum (strain ATCC 700922 / JCM 11081 / NRC-1) (Halobacterium halobium)).